The chain runs to 475 residues: Ataxin-10 (475 aa).

At R10 the chain carries Omega-N-methylarginine. S12 and S77 each carry phosphoserine. A Phosphothreonine modification is found at T82. Position 430 is a phosphoserine (S430).

The protein belongs to the ataxin-10 family. As to quaternary structure, homooligomer. Interacts with GNB2. Interacts with IQCB1. Interacts with OGT. Interacts with PLK1. Post-translationally, polyubiquitinated. In terms of processing, phosphorylation at Ser-12 by AURKB promotes the association of ATXN10 with PLK1. Phosphorylation at Ser-77 and Thr-82 by PLK1 may play a role in the regulation of cytokinesis and may stimulate the proteasome-mediated degradation of ATXN10. In high cell density areas; cerebellar cortex, dentate gyrus, hippocampus, anterior olfactory nucleus, primary olfactory cortex.

Its subcellular location is the cytoplasm. The protein localises to the perinuclear region. The protein resides in the midbody. It is found in the cytoskeleton. It localises to the cilium basal body. Its subcellular location is the microtubule organizing center. The protein localises to the centrosome. The protein resides in the centriole. In terms of biological role, may play a role in the regulation of cytokinesis. May play a role in signaling by stimulating protein glycosylation. Induces neuritogenesis by activating the Ras-MAP kinase pathway and is necessary for the survival of cerebellar neurons. Does not appear to play a major role in ciliogenesis. The chain is Ataxin-10 (Atxn10) from Mus musculus (Mouse).